Consider the following 308-residue polypeptide: MATIQAFWRFSRPHTIIGTTLSVWAVYLLTILGDGNSVNSPASLDLVFGAWLACLLGNVYIVGLNQLWDVDIDRINKPNLPLANGDFSIAQGRWIVGLCGVASLAIAWGLGLWLGLTVGISLIIGTAYSVPPVRLKRFSLLAALCILTVRGIVVNLGLFLFFRIGLGYPPTLITPIWVLTLFILVFTVAIAIFKDVPDMEGDRQFKIQTLTLQIGKQNVFRGTLILLTGCYLAMAIWGLWAAMPLNTAFLIVSHLCLLALLWWRSRDVHLESKTEIASFYQFIWKLFFLEYLLYPLALWLPNFSNTIF.

The next 8 helical transmembrane spans lie at 13 to 33, 44 to 64, 104 to 124, 142 to 162, 173 to 193, 219 to 241, 245 to 263, and 279 to 299; these read PHTI…TILG, LDLV…IVGL, LAIA…SLII, AALC…FLFF, ITPI…IAIF, VFRG…GLWA, LNTA…LLWW, and FYQF…LALW.

This sequence belongs to the UbiA prenyltransferase family.

It localises to the membrane. The enzyme catalyses phytyl diphosphate + homogentisate + H(+) = 2-methyl-6-phytyl-1,4-benzene-1,4-diol + CO2 + diphosphate. It functions in the pathway cofactor biosynthesis; tocopherol biosynthesis. In terms of biological role, involved in the synthesis of tocopherol (vitamin E). Catalyzes the condensation of homogentisate and phytyl diphosphate to form dimethylphytylhydrquinone. In Synechocystis sp. (strain ATCC 27184 / PCC 6803 / Kazusa), this protein is Homogentisate phytyltransferase.